The sequence spans 463 residues: Bifunctional protein GlmU (463 aa).

A pyrophosphorylase region spans residues M1 to R233. UDP-N-acetyl-alpha-D-glucosamine contacts are provided by residues L10–G13, K24, Q76, G81–T82, Y104–D106, G143, E158, N173, and N231. D106 is a Mg(2+) binding site. A Mg(2+)-binding site is contributed by N231. Residues Y234–K254 are linker. The tract at residues G255 to R463 is N-acetyltransferase. UDP-N-acetyl-alpha-D-glucosamine contacts are provided by R336 and K354. H366 acts as the Proton acceptor in catalysis. UDP-N-acetyl-alpha-D-glucosamine-binding residues include Y369 and N380. Acetyl-CoA contacts are provided by residues N389 to Y390, A426, and R443.

This sequence in the N-terminal section; belongs to the N-acetylglucosamine-1-phosphate uridyltransferase family. It in the C-terminal section; belongs to the transferase hexapeptide repeat family. In terms of assembly, homotrimer. Mg(2+) serves as cofactor.

It localises to the cytoplasm. The enzyme catalyses alpha-D-glucosamine 1-phosphate + acetyl-CoA = N-acetyl-alpha-D-glucosamine 1-phosphate + CoA + H(+). The catalysed reaction is N-acetyl-alpha-D-glucosamine 1-phosphate + UTP + H(+) = UDP-N-acetyl-alpha-D-glucosamine + diphosphate. It participates in nucleotide-sugar biosynthesis; UDP-N-acetyl-alpha-D-glucosamine biosynthesis; N-acetyl-alpha-D-glucosamine 1-phosphate from alpha-D-glucosamine 6-phosphate (route II): step 2/2. Its pathway is nucleotide-sugar biosynthesis; UDP-N-acetyl-alpha-D-glucosamine biosynthesis; UDP-N-acetyl-alpha-D-glucosamine from N-acetyl-alpha-D-glucosamine 1-phosphate: step 1/1. The protein operates within bacterial outer membrane biogenesis; LPS lipid A biosynthesis. Functionally, catalyzes the last two sequential reactions in the de novo biosynthetic pathway for UDP-N-acetylglucosamine (UDP-GlcNAc). The C-terminal domain catalyzes the transfer of acetyl group from acetyl coenzyme A to glucosamine-1-phosphate (GlcN-1-P) to produce N-acetylglucosamine-1-phosphate (GlcNAc-1-P), which is converted into UDP-GlcNAc by the transfer of uridine 5-monophosphate (from uridine 5-triphosphate), a reaction catalyzed by the N-terminal domain. This chain is Bifunctional protein GlmU, found in Caldicellulosiruptor saccharolyticus (strain ATCC 43494 / DSM 8903 / Tp8T 6331).